The primary structure comprises 274 residues: Acetyl-coenzyme A carboxylase carboxyl transferase subunit alpha (274 aa).

The region spanning 1 to 245 is the CoA carboxyltransferase C-terminal domain; the sequence is MENSQELTPW…RENLKKAIEG (245 aa).

The protein belongs to the AccA family. Acetyl-CoA carboxylase is a heterohexamer composed of biotin carboxyl carrier protein (AccB), biotin carboxylase (AccC) and two subunits each of ACCase subunit alpha (AccA) and ACCase subunit beta (AccD).

The protein resides in the cytoplasm. The catalysed reaction is N(6)-carboxybiotinyl-L-lysyl-[protein] + acetyl-CoA = N(6)-biotinyl-L-lysyl-[protein] + malonyl-CoA. The protein operates within lipid metabolism; malonyl-CoA biosynthesis; malonyl-CoA from acetyl-CoA: step 1/1. Component of the acetyl coenzyme A carboxylase (ACC) complex. First, biotin carboxylase catalyzes the carboxylation of biotin on its carrier protein (BCCP) and then the CO(2) group is transferred by the carboxyltransferase to acetyl-CoA to form malonyl-CoA. This chain is Acetyl-coenzyme A carboxylase carboxyl transferase subunit alpha, found in Clostridium acetobutylicum (strain ATCC 824 / DSM 792 / JCM 1419 / IAM 19013 / LMG 5710 / NBRC 13948 / NRRL B-527 / VKM B-1787 / 2291 / W).